Reading from the N-terminus, the 395-residue chain is Zinc finger protein 385D (395 aa).

3 consecutive Matrin-type zinc fingers follow at residues 80–110 (ISCN…KLKA), 204–234 (LYCS…MLEA), and 267–297 (FHCE…RASG). Positions 282 to 308 (LKQHISSRRHKDRASGKPPKPKYSPYN) are disordered.

Its subcellular location is the nucleus. The chain is Zinc finger protein 385D (Znf385d) from Rattus norvegicus (Rat).